The chain runs to 1162 residues: DNA-directed RNA polymerase subunit beta (1162 aa).

It belongs to the RNA polymerase beta chain family. In terms of assembly, the RNAP catalytic core consists of 2 alpha, 1 beta, 1 beta' and 1 omega subunit. When a sigma factor is associated with the core the holoenzyme is formed, which can initiate transcription.

The catalysed reaction is RNA(n) + a ribonucleoside 5'-triphosphate = RNA(n+1) + diphosphate. Functionally, DNA-dependent RNA polymerase catalyzes the transcription of DNA into RNA using the four ribonucleoside triphosphates as substrates. The protein is DNA-directed RNA polymerase subunit beta of Clavibacter sepedonicus (Clavibacter michiganensis subsp. sepedonicus).